A 285-amino-acid chain; its full sequence is Probable endonuclease 4 (285 aa).

Residues histidine 68, histidine 108, glutamate 145, aspartate 179, histidine 182, histidine 216, aspartate 229, histidine 231, and glutamate 261 each coordinate Zn(2+).

It belongs to the AP endonuclease 2 family. It depends on Zn(2+) as a cofactor.

The catalysed reaction is Endonucleolytic cleavage to 5'-phosphooligonucleotide end-products.. Its function is as follows. Endonuclease IV plays a role in DNA repair. It cleaves phosphodiester bonds at apurinic or apyrimidinic (AP) sites, generating a 3'-hydroxyl group and a 5'-terminal sugar phosphate. The chain is Probable endonuclease 4 from Geotalea daltonii (strain DSM 22248 / JCM 15807 / FRC-32) (Geobacter daltonii).